Reading from the N-terminus, the 101-residue chain is Pterin-4-alpha-carbinolamine dehydratase (101 aa).

The protein belongs to the pterin-4-alpha-carbinolamine dehydratase family.

It carries out the reaction (4aS,6R)-4a-hydroxy-L-erythro-5,6,7,8-tetrahydrobiopterin = (6R)-L-erythro-6,7-dihydrobiopterin + H2O. This is Pterin-4-alpha-carbinolamine dehydratase (Pcd) from Drosophila virilis (Fruit fly).